Reading from the N-terminus, the 228-residue chain is MMVSMRDMLNAGVHFGHQTRYWNPKMKPFIFGSKNKVHIINLEKTMTMFNFALFELKKISLRKGKILFVGTKQSASKIIKESAILCKQFYVNHRWLGGMLTNWKTVRQSIKRLKDLESQSQDGTFNKLTKKEVLLRMRELSKLENSLGGIKEMGSLPDALFVVDADHEHIAIREANNLGISVFSIVDTNSDPDGVDFIIPGNDDAIRAVNLYLNAVSKVIKKNVKNEK.

Belongs to the universal ribosomal protein uS2 family.

The protein is Small ribosomal subunit protein uS2 of Buchnera aphidicola subsp. Baizongia pistaciae (strain Bp).